The following is a 419-amino-acid chain: UDP-N-acetylglucosamine 1-carboxyvinyltransferase (419 aa).

Residue 22–23 (KN) coordinates phosphoenolpyruvate. Arginine 91 contributes to the UDP-N-acetyl-alpha-D-glucosamine binding site. Residue cysteine 115 is the Proton donor of the active site. At cysteine 115 the chain carries 2-(S-cysteinyl)pyruvic acid O-phosphothioketal. UDP-N-acetyl-alpha-D-glucosamine contacts are provided by residues 120–124 (RPVDL), 160–163 (KVSV), aspartate 305, and valine 327.

This sequence belongs to the EPSP synthase family. MurA subfamily.

Its subcellular location is the cytoplasm. The catalysed reaction is phosphoenolpyruvate + UDP-N-acetyl-alpha-D-glucosamine = UDP-N-acetyl-3-O-(1-carboxyvinyl)-alpha-D-glucosamine + phosphate. The protein operates within cell wall biogenesis; peptidoglycan biosynthesis. Its function is as follows. Cell wall formation. Adds enolpyruvyl to UDP-N-acetylglucosamine. This Shigella boydii serotype 18 (strain CDC 3083-94 / BS512) protein is UDP-N-acetylglucosamine 1-carboxyvinyltransferase.